A 128-amino-acid chain; its full sequence is S-adenosylmethionine decarboxylase proenzyme (128 aa).

The Schiff-base intermediate with substrate; via pyruvic acid role is filled by S61. Pyruvic acid (Ser); by autocatalysis is present on S61. The Proton acceptor; for processing activity role is filled by H66. The active-site Proton donor; for catalytic activity is C81.

It belongs to the prokaryotic AdoMetDC family. Type 1 subfamily. As to quaternary structure, heterotetramer of two alpha and two beta chains arranged as a dimer of alpha/beta heterodimers. Requires pyruvate as cofactor. Post-translationally, is synthesized initially as an inactive proenzyme. Formation of the active enzyme involves a self-maturation process in which the active site pyruvoyl group is generated from an internal serine residue via an autocatalytic post-translational modification. Two non-identical subunits are generated from the proenzyme in this reaction, and the pyruvate is formed at the N-terminus of the alpha chain, which is derived from the carboxyl end of the proenzyme. The post-translation cleavage follows an unusual pathway, termed non-hydrolytic serinolysis, in which the side chain hydroxyl group of the serine supplies its oxygen atom to form the C-terminus of the beta chain, while the remainder of the serine residue undergoes an oxidative deamination to produce ammonia and the pyruvoyl group blocking the N-terminus of the alpha chain.

It catalyses the reaction S-adenosyl-L-methionine + H(+) = S-adenosyl 3-(methylsulfanyl)propylamine + CO2. The protein operates within amine and polyamine biosynthesis; S-adenosylmethioninamine biosynthesis; S-adenosylmethioninamine from S-adenosyl-L-methionine: step 1/1. Its function is as follows. Catalyzes the decarboxylation of S-adenosylmethionine to S-adenosylmethioninamine (dcAdoMet), the propylamine donor required for the synthesis of the polyamines spermine and spermidine from the diamine putrescine. This Synechococcus sp. (strain WH7803) protein is S-adenosylmethionine decarboxylase proenzyme.